The following is a 513-amino-acid chain: Histidine ammonia-lyase (513 aa).

The 5-imidazolinone (Ala-Gly) cross-link spans 145–147 (ASG). A 2,3-didehydroalanine (Ser) modification is found at serine 146.

This sequence belongs to the PAL/histidase family. Contains an active site 4-methylidene-imidazol-5-one (MIO), which is formed autocatalytically by cyclization and dehydration of residues Ala-Ser-Gly.

The protein resides in the cytoplasm. The catalysed reaction is L-histidine = trans-urocanate + NH4(+). The protein operates within amino-acid degradation; L-histidine degradation into L-glutamate; N-formimidoyl-L-glutamate from L-histidine: step 1/3. In Vibrio vulnificus (strain YJ016), this protein is Histidine ammonia-lyase.